Consider the following 358-residue polypeptide: MGDWSFLGEFLEEVHKHSTVIGKVWLTVLFIFRMLVLGTAAESSWGDEQADFQCDTMQPGCGNVCYDQAFPISHIRYWVLQIIFVSTPSLVYMGHAMHTVRMQEKRKLREAERAKEARGAGSYEYPVAEKAELSCWEEVNGRIVLQGTLLNTYVCSILIRTTMEVAFIVGQYLLYGIFLDTLHVCRRSPCPHPVNCYVSRPTEKNVFIVFMLAVAALSLFLSLAELYHLGWKKLRQRFVKSGQGMAECQLPGPSAGIVQNCTPPPDFNQCLENGPGGKFFNPFSNKMASQQNTDNLATEQVQGQEPIPGEGFIHIRYAQKPEVPNGASPGHRLPHGYQSDKRRLSKASSKARSDDLSV.

Topologically, residues 1 to 19 (MGDWSFLGEFLEEVHKHST) are cytoplasmic. Residues 20-40 (VIGKVWLTVLFIFRMLVLGTA) form a helical membrane-spanning segment. Over 41–76 (AESSWGDEQADFQCDTMQPGCGNVCYDQAFPISHIR) the chain is Extracellular. A helical membrane pass occupies residues 77 to 97 (YWVLQIIFVSTPSLVYMGHAM). At 98–164 (HTVRMQEKRK…CSILIRTTME (67 aa)) the chain is on the cytoplasmic side. Residues 165–185 (VAFIVGQYLLYGIFLDTLHVC) traverse the membrane as a helical segment. Over 186-205 (RRSPCPHPVNCYVSRPTEKN) the chain is Extracellular. Residues 206–226 (VFIVFMLAVAALSLFLSLAEL) form a helical membrane-spanning segment. Over 227–358 (YHLGWKKLRQ…SKARSDDLSV (132 aa)) the chain is Cytoplasmic. The segment at 318–358 (AQKPEVPNGASPGHRLPHGYQSDKRRLSKASSKARSDDLSV) is disordered. Residues Ser-353 and Ser-357 each carry the phosphoserine modification.

The protein belongs to the connexin family. Alpha-type (group II) subfamily. A connexon is composed of a hexamer of connexins.

It localises to the cell membrane. The protein resides in the cell junction. The protein localises to the gap junction. Its function is as follows. One gap junction consists of a cluster of closely packed pairs of transmembrane channels, the connexons, through which materials of low MW diffuse from one cell to a neighboring cell. This is Gap junction alpha-5 protein (GJA5) from Canis lupus familiaris (Dog).